A 1038-amino-acid chain; its full sequence is Protein transport protein SEC24 A (1038 aa).

The interval 1–247 (MGTENQGYPN…PPHTGGFAQR (247 aa)) is disordered. The segment covering 22–33 (SAPPPGIPPQSG) has biased composition (pro residues). Zn(2+)-binding residues include Cys-371, Cys-374, Cys-393, and Cys-396. Residues 371-396 (CRRCRTYVNPFVTFTDSGRKWRCNIC) are zinc finger-like.

The protein belongs to the SEC23/SEC24 family. SEC24 subfamily. As to quaternary structure, component of the coat protein complex II (COPII), composed of at least five proteins: the Sec23/24 complex, the Sec13/31 complex and Sar1. Interacts with SEC221, SEC23E/SEC23A, SEC23B, SEC23G/SEC23C and SEC23F/SEC23D. In terms of assembly, (Microbial infection) Interacts with turnip mosaic virus (TuMV) 6K2 in COPII-coated vesicles. In terms of tissue distribution, mainly expressed in pollen, leaves, inflorescences, roots and stems, and, to a lower extent, in cotyledons, petioles and hypocotyls.

It localises to the cytoplasmic vesicle. The protein resides in the COPII-coated vesicle membrane. The protein localises to the endoplasmic reticulum membrane. It is found in the golgi apparatus membrane. Its subcellular location is the cytoplasm. It localises to the cytosol. Its function is as follows. Essential protein. Component of the coat protein complex II (COPII), that covers ER-derived vesicles involved in transport from the endoplasmic reticulum to the Golgi apparatus. COPII is composed of at least five proteins: the SEC23/24 complex, the SEC13/31 complex, and the protein SAR1. Acts in the cytoplasm to promote the transport of secretory, plasma membrane, and vacuolar proteins from the endoplasmic reticulum to the Golgi complex. Involved in maintaining the dynamic identity of organelles of the early secretory pathway. Regulates cell size patterning, and prevents CDKA;1-, DEK1- and ACR4-dependent endoreduplication and giant cells formation in sepals. Required for male gametophytes (pollen grains) development and transmission. Functionally, (Microbial infection) Contributes to viral systemic infection of turnip mosaic virus (TuMV) by triggering the formation of host endoplasmic reticulum (ER)-derived viral vesicles that carry the viral RNA (vRNA) to plasmodesmata for cell-to-cell viral movement. This Arabidopsis thaliana (Mouse-ear cress) protein is Protein transport protein SEC24 A.